The primary structure comprises 85 residues: MKINKLTLNERKNDILSYFSEINTPFRTSEVAEHLGVSAYQARHYLQCLEKEGKIKRSPVRRGASTLWEISAVTEPSVKTDRIAD.

The protein to E.coli PapI and DaaF.

In terms of biological role, may have a possible regulatory function on the expression of the other AFA-III genes. In Escherichia coli, this protein is Dr hemagglutinin AFA-III operon regulatory protein AfaF (afaF).